Consider the following 202-residue polypeptide: Ribosome maturation factor RimM (202 aa).

The PRC barrel domain occupies 121–202 (KDEYYWVDLI…CITVDWQPDY (82 aa)).

Belongs to the RimM family. As to quaternary structure, binds ribosomal protein uS19.

The protein resides in the cytoplasm. Functionally, an accessory protein needed during the final step in the assembly of 30S ribosomal subunit, possibly for assembly of the head region. Essential for efficient processing of 16S rRNA. May be needed both before and after RbfA during the maturation of 16S rRNA. It has affinity for free ribosomal 30S subunits but not for 70S ribosomes. The protein is Ribosome maturation factor RimM of Polaromonas sp. (strain JS666 / ATCC BAA-500).